Consider the following 757-residue polypeptide: Polyribonucleotide nucleotidyltransferase (757 aa).

Residues aspartate 525 and aspartate 531 each coordinate Mg(2+). The region spanning proline 591 to valine 650 is the KH domain. The S1 motif domain maps to glycine 662–valine 734. Positions glutamate 737–glycine 757 are disordered.

This sequence belongs to the polyribonucleotide nucleotidyltransferase family. Mg(2+) is required as a cofactor.

It is found in the cytoplasm. It carries out the reaction RNA(n+1) + phosphate = RNA(n) + a ribonucleoside 5'-diphosphate. Its function is as follows. Involved in mRNA degradation. Catalyzes the phosphorolysis of single-stranded polyribonucleotides processively in the 3'- to 5'-direction. This is Polyribonucleotide nucleotidyltransferase from Clavibacter michiganensis subsp. michiganensis (strain NCPPB 382).